Here is a 98-residue protein sequence, read N- to C-terminus: Small ribosomal subunit protein bS18 (98 aa).

Belongs to the bacterial ribosomal protein bS18 family. As to quaternary structure, part of the 30S ribosomal subunit. Forms a tight heterodimer with protein bS6.

Binds as a heterodimer with protein bS6 to the central domain of the 16S rRNA, where it helps stabilize the platform of the 30S subunit. The polypeptide is Small ribosomal subunit protein bS18 (Flavobacterium johnsoniae (strain ATCC 17061 / DSM 2064 / JCM 8514 / BCRC 14874 / CCUG 350202 / NBRC 14942 / NCIMB 11054 / UW101) (Cytophaga johnsonae)).